The chain runs to 379 residues: Probable pectin lyase B (379 aa).

The signal sequence occupies residues 1–20 (MHYKLLFAAAAASLASAVSA). Disulfide bonds link Cys-83/Cys-102 and Cys-92/Cys-226. Residues Asn-129 and Asn-252 are each glycosylated (N-linked (GlcNAc...) asparagine). The active site involves Arg-256. A disulfide bridge connects residues Cys-323 and Cys-331.

Belongs to the polysaccharide lyase 1 family.

Its subcellular location is the secreted. It carries out the reaction Eliminative cleavage of (1-&gt;4)-alpha-D-galacturonan methyl ester to give oligosaccharides with 4-deoxy-6-O-methyl-alpha-D-galact-4-enuronosyl groups at their non-reducing ends.. In terms of biological role, pectinolytic enzymes consist of four classes of enzymes: pectin lyase, polygalacturonase, pectin methylesterase and rhamnogalacturonase. Among pectinolytic enzymes, pectin lyase is the most important in depolymerization of pectin, since it cleaves internal glycosidic bonds of highly methylated pectins. The protein is Probable pectin lyase B (pelB) of Aspergillus niger (strain ATCC MYA-4892 / CBS 513.88 / FGSC A1513).